A 709-amino-acid polypeptide reads, in one-letter code: Polyribonucleotide nucleotidyltransferase (709 aa).

Residues Asp-485 and Asp-491 each coordinate Mg(2+). Residues 552-611 enclose the KH domain; the sequence is PRIYTMKIDPKKIKDVIGKGGATIRSLTEETGTSIDIDDDGTVKIAAVDSNAAKNVMGRI. Residues 621–689 form the S1 motif domain; sequence GAIYKGKVTR…RQGRIRLTMK (69 aa).

This sequence belongs to the polyribonucleotide nucleotidyltransferase family. In terms of assembly, component of the RNA degradosome, which is a multiprotein complex involved in RNA processing and mRNA degradation. Requires Mg(2+) as cofactor.

It localises to the cytoplasm. The enzyme catalyses RNA(n+1) + phosphate = RNA(n) + a ribonucleoside 5'-diphosphate. Involved in mRNA degradation. Catalyzes the phosphorolysis of single-stranded polyribonucleotides processively in the 3'- to 5'-direction. The chain is Polyribonucleotide nucleotidyltransferase from Haemophilus influenzae (strain PittGG).